We begin with the raw amino-acid sequence, 179 residues long: Inorganic pyrophosphatase (179 aa).

Lysine 30, arginine 44, and tyrosine 56 together coordinate substrate. Residues aspartate 66, aspartate 71, and aspartate 103 each contribute to the Mg(2+) site. Position 143 (tyrosine 143) interacts with substrate.

Belongs to the PPase family. As to quaternary structure, homohexamer. It depends on Mg(2+) as a cofactor.

The protein resides in the cytoplasm. It catalyses the reaction diphosphate + H2O = 2 phosphate + H(+). Functionally, catalyzes the hydrolysis of inorganic pyrophosphate (PPi) forming two phosphate ions. This chain is Inorganic pyrophosphatase, found in Wigglesworthia glossinidia brevipalpis.